A 574-amino-acid chain; its full sequence is Proline--tRNA ligase (574 aa).

This sequence belongs to the class-II aminoacyl-tRNA synthetase family. ProS type 1 subfamily. Homodimer.

The protein localises to the cytoplasm. It catalyses the reaction tRNA(Pro) + L-proline + ATP = L-prolyl-tRNA(Pro) + AMP + diphosphate. Functionally, catalyzes the attachment of proline to tRNA(Pro) in a two-step reaction: proline is first activated by ATP to form Pro-AMP and then transferred to the acceptor end of tRNA(Pro). As ProRS can inadvertently accommodate and process non-cognate amino acids such as alanine and cysteine, to avoid such errors it has two additional distinct editing activities against alanine. One activity is designated as 'pretransfer' editing and involves the tRNA(Pro)-independent hydrolysis of activated Ala-AMP. The other activity is designated 'posttransfer' editing and involves deacylation of mischarged Ala-tRNA(Pro). The misacylated Cys-tRNA(Pro) is not edited by ProRS. In Sodalis glossinidius (strain morsitans), this protein is Proline--tRNA ligase.